A 256-amino-acid chain; its full sequence is Small ribosomal subunit protein eS1 (256 aa).

Over residues 1-18 (MAVGKNKRLSKGKKGVKK) the composition is skewed to basic residues. A disordered region spans residues 1–20 (MAVGKNKRLSKGKKGVKKRT). The residue at position 2 (alanine 2) is an N-acetylalanine; partial.

This sequence belongs to the eukaryotic ribosomal protein eS1 family. In terms of assembly, component of the small ribosomal subunit. Mature ribosomes consist of a small (40S) and a large (60S) subunit. The 40S subunit contains about 33 different proteins and 1 molecule of RNA (18S). The 60S subunit contains about 49 different proteins and 3 molecules of RNA (25S, 5.8S and 5S).

It is found in the cytoplasm. The protein is Small ribosomal subunit protein eS1 (rps1) of Aspergillus clavatus (strain ATCC 1007 / CBS 513.65 / DSM 816 / NCTC 3887 / NRRL 1 / QM 1276 / 107).